Consider the following 334-residue polypeptide: MLTYAQAGVDEEKTSKALRFIIEAARKTFEFRKGKLGEPGDIGHYSALLDFGNYYLAITTDGVGTKVLVAEAVGKFDTIGIDMIAMNVNDLICVGAEPIALVDYFAIKEPNERVFEEVAKGLYKGAKEAGIAIVGGETAVMPDLVNGYDLAGTAIGIVEKDKVITGEKIRPGDAVIGISSSGIHSNGLTLARKLLIPKYGLDYEYESRKLWEWLLEPTRIYVKPILELLKSVEVHGLAHITGGGLLNLKRITNYGFRLNMPPINGIFKLIHENGVPLEEMFRVFNMGVGFVVVVSQEDKEEALQILNRYYESFELGTVSERPGIIVENYGVKFI.

It belongs to the AIR synthase family.

The protein localises to the cytoplasm. The catalysed reaction is 2-formamido-N(1)-(5-O-phospho-beta-D-ribosyl)acetamidine + ATP = 5-amino-1-(5-phospho-beta-D-ribosyl)imidazole + ADP + phosphate + H(+). It functions in the pathway purine metabolism; IMP biosynthesis via de novo pathway; 5-amino-1-(5-phospho-D-ribosyl)imidazole from N(2)-formyl-N(1)-(5-phospho-D-ribosyl)glycinamide: step 2/2. This Pyrococcus furiosus (strain ATCC 43587 / DSM 3638 / JCM 8422 / Vc1) protein is Phosphoribosylformylglycinamidine cyclo-ligase.